A 248-amino-acid polypeptide reads, in one-letter code: Tyrosine recombinase XerD-like (248 aa).

One can recognise a Core-binding (CB) domain in the interval 1-72 (MIAFIEPFLA…TVNQFLYYLY (72 aa)). Residues 92–248 (SLKPQLTRLD…PITLEKYYKM (157 aa)) enclose the Tyr recombinase domain. Arg-213 is a catalytic residue. The active-site O-(3'-phospho-DNA)-tyrosine intermediate is the Tyr-245.

The protein belongs to the 'phage' integrase family. XerD-like subfamily.

Its subcellular location is the cytoplasm. In terms of biological role, putative tyrosine recombinase. Not involved in the cutting and rejoining of the recombining DNA molecules on dif(SL) site. The polypeptide is Tyrosine recombinase XerD-like (Streptococcus equi subsp. zooepidemicus (strain MGCS10565)).